A 155-amino-acid polypeptide reads, in one-letter code: Small ribosomal subunit protein mS86 (155 aa).

The transit peptide at 1–27 (MHYMGLFSRAGNIFRQPRALQASNAML) directs the protein to the mitochondrion. The RRM domain maps to 36–114 (SKIFVGGLSP…RIIGVHPADS (79 aa)).

Belongs to the GR-RBP family. In terms of assembly, component of the mitochondrial ribosome small subunit.

The protein localises to the mitochondrion. Its function is as follows. Possibly has a role in RNA transcription or processing during stress. In Arabidopsis thaliana (Mouse-ear cress), this protein is Small ribosomal subunit protein mS86 (RBG6).